A 525-amino-acid chain; its full sequence is GMP synthase [glutamine-hydrolyzing] (525 aa).

The Glutamine amidotransferase type-1 domain occupies Arg-9 to Leu-207. Cys-86 (nucleophile) is an active-site residue. Catalysis depends on residues His-181 and Glu-183. The region spanning Trp-208–Arg-400 is the GMPS ATP-PPase domain. Position 235–241 (Ser-235–Ser-241) interacts with ATP.

As to quaternary structure, homodimer.

It catalyses the reaction XMP + L-glutamine + ATP + H2O = GMP + L-glutamate + AMP + diphosphate + 2 H(+). The protein operates within purine metabolism; GMP biosynthesis; GMP from XMP (L-Gln route): step 1/1. Catalyzes the synthesis of GMP from XMP. The polypeptide is GMP synthase [glutamine-hydrolyzing] (Edwardsiella ictaluri (strain 93-146)).